We begin with the raw amino-acid sequence, 362 residues long: 3-dehydroquinate synthase (362 aa).

NAD(+) is bound by residues D71–K76, G105–D109, T129–T130, K142, K151, and C169–T172. Zn(2+) contacts are provided by E184, H247, and H264.

The protein belongs to the sugar phosphate cyclases superfamily. Dehydroquinate synthase family. Requires Co(2+) as cofactor. It depends on Zn(2+) as a cofactor. NAD(+) is required as a cofactor.

It is found in the cytoplasm. The enzyme catalyses 7-phospho-2-dehydro-3-deoxy-D-arabino-heptonate = 3-dehydroquinate + phosphate. Its pathway is metabolic intermediate biosynthesis; chorismate biosynthesis; chorismate from D-erythrose 4-phosphate and phosphoenolpyruvate: step 2/7. Catalyzes the conversion of 3-deoxy-D-arabino-heptulosonate 7-phosphate (DAHP) to dehydroquinate (DHQ). This is 3-dehydroquinate synthase from Salmonella enteritidis PT4 (strain P125109).